The following is a 1337-amino-acid chain: uncharacterized protein (1337 aa).

2 disordered regions span residues 1 to 94 (MPTS…QSSA) and 119 to 174 (ARDI…PSFF). Low complexity-rich tracts occupy residues 18–37 (SNTS…ASGS) and 68–79 (SSTHFQSSHSVS). Residues 80-94 (NAHNQSPLNQSQSSA) show a composition bias toward polar residues. Over residues 123 to 147 (PQQPSHSQNPSSSSSSSSSQSSQHS) the composition is skewed to low complexity. The segment covering 157–167 (NEKKSLDDPSP) has biased composition (basic and acidic residues). 6 helical membrane passes run 209 to 229 (GLKP…LVLA), 241 to 261 (FFVV…PMLW), 267 to 287 (FLLL…ATVA), 328 to 348 (VRPL…ALFI), 361 to 381 (CVFS…YPYF), and 387 to 407 (LFFI…TLFI). Disordered stretches follow at residues 623-662 (SHVR…SHKS) and 868-894 (YDEN…DADH). The span at 626–644 (RTGSNNSEAPLAAKTSTTK) shows a compositional bias: polar residues. Residues 868–880 (YDENIHNDVDKDM) are compositionally biased toward basic and acidic residues. Transmembrane regions (helical) follow at residues 917–937 (MNVF…PAFC), 975–995 (IFGT…GSGH), 997–1017 (LGNA…IQFI), 1021–1041 (FVIL…LTVT), 1066–1086 (FLTV…PQPR), and 1275–1295 (FAVG…IMFI).

The protein resides in the membrane. This is an uncharacterized protein from Schizosaccharomyces pombe (strain 972 / ATCC 24843) (Fission yeast).